A 272-amino-acid polypeptide reads, in one-letter code: MLRIAGRRASSLSRWPVRSVAPSSSAFISANHFSSDDDSSSPRSISPSLASVFLHHTRGFSSNSVSHAHDMGLVPDLPPTVAAIKNPTSKIVYDEHNHERYPPGDPSKRAFAYFVLTGGRFVYASLVRLLILKFVLSMSASKDVLALASLEVDLSSIEPGTTVTVKWRGKPVFIRRRTEDDINLANSVDLGSLRDPQQDAERVKSPEWLVVIGVCTHLGCIPLPNAGDFGGWFCPCHGSHYDISGRIRKGPAPYNLEVPTYSFLEENKLLIG.

The transit peptide at 1 to 60 (MLRIAGRRASSLSRWPVRSVAPSSSAFISANHFSSDDDSSSPRSISPSLASVFLHHTRGF) directs the protein to the mitochondrion. At 61 to 109 (SSNSVSHAHDMGLVPDLPPTVAAIKNPTSKIVYDEHNHERYPPGDPSKR) the chain is on the mitochondrial matrix side. Residues 110–132 (AFAYFVLTGGRFVYASLVRLLIL) traverse the membrane as a helical segment. Residues 133–272 (KFVLSMSASK…FLEENKLLIG (140 aa)) are Mitochondrial intermembrane-facing. Residues 182–270 (INLANSVDLG…YSFLEENKLL (89 aa)) enclose the Rieske domain. [2Fe-2S] cluster contacts are provided by cysteine 215, histidine 217, cysteine 234, and histidine 237. A disulfide bridge links cysteine 220 with cysteine 236.

The protein belongs to the Rieske iron-sulfur protein family. In terms of assembly, component of the ubiquinol-cytochrome c oxidoreductase (cytochrome b-c1 complex, complex III, CIII), a multisubunit enzyme composed of 3 respiratory subunits cytochrome b, cytochrome c1 and Rieske protein, 2 core protein subunits, and several low-molecular weight protein subunits. The complex exists as an obligatory dimer and forms supercomplexes (SCs) in the inner mitochondrial membrane with cytochrome c oxidase (complex IV, CIV). [2Fe-2S] cluster is required as a cofactor. In terms of tissue distribution, high levels are seen in the flowers while a low level expression is seen in the roots, leaves and stems.

It localises to the mitochondrion inner membrane. The catalysed reaction is a quinol + 2 Fe(III)-[cytochrome c](out) = a quinone + 2 Fe(II)-[cytochrome c](out) + 2 H(+)(out). In terms of biological role, component of the ubiquinol-cytochrome c oxidoreductase, a multisubunit transmembrane complex that is part of the mitochondrial electron transport chain which drives oxidative phosphorylation. The respiratory chain contains 3 multisubunit complexes succinate dehydrogenase (complex II, CII), ubiquinol-cytochrome c oxidoreductase (cytochrome b-c1 complex, complex III, CIII) and cytochrome c oxidase (complex IV, CIV), that cooperate to transfer electrons derived from NADH and succinate to molecular oxygen, creating an electrochemical gradient over the inner membrane that drives transmembrane transport and the ATP synthase. The cytochrome b-c1 complex catalyzes electron transfer from ubiquinol to cytochrome c, linking this redox reaction to translocation of protons across the mitochondrial inner membrane, with protons being carried across the membrane as hydrogens on the quinol. In the process called Q cycle, 2 protons are consumed from the matrix, 4 protons are released into the intermembrane space and 2 electrons are passed to cytochrome c. The Rieske protein is a catalytic core subunit containing a [2Fe-2S] iron-sulfur cluster. It cycles between 2 conformational states during catalysis to transfer electrons from the quinol bound in the Q(0) site in cytochrome b to cytochrome c1. The sequence is that of Cytochrome b-c1 complex subunit Rieske-2, mitochondrial from Nicotiana tabacum (Common tobacco).